A 234-amino-acid chain; its full sequence is Chalcone--flavanone isomerase 1 (234 aa).

Residues T50, N115, and S192 each contribute to the substrate site.

The protein belongs to the chalcone isomerase family.

It catalyses the reaction a chalcone = a flavanone.. Its pathway is secondary metabolite biosynthesis; flavonoid biosynthesis. In terms of biological role, catalyzes the intramolecular cyclization of bicyclic chalcones into tricyclic (S)-flavanones. Responsible for the isomerization of 4,2',4',6'-tetrahydroxychalcone (also termed chalcone) into naringenin. The polypeptide is Chalcone--flavanone isomerase 1 (CHI1) (Vitis vinifera (Grape)).